A 393-amino-acid chain; its full sequence is Elongation factor Tu (393 aa).

Residues Lys-10–Glu-202 form the tr-type G domain. Residues Gly-19–Thr-26 form a G1 region. Position 19–26 (Gly-19–Thr-26) interacts with GTP. Residue Thr-26 coordinates Mg(2+). A G2 region spans residues Gly-60 to Asn-64. The interval Asp-81–Gly-84 is G3. GTP contacts are provided by residues Asp-81–His-85 and Asn-136–Asp-139. The segment at Asn-136–Asp-139 is G4. The G5 stretch occupies residues Ser-174–Leu-176.

Belongs to the TRAFAC class translation factor GTPase superfamily. Classic translation factor GTPase family. EF-Tu/EF-1A subfamily. As to quaternary structure, monomer.

The protein localises to the cytoplasm. It catalyses the reaction GTP + H2O = GDP + phosphate + H(+). Functionally, GTP hydrolase that promotes the GTP-dependent binding of aminoacyl-tRNA to the A-site of ribosomes during protein biosynthesis. This Clostridium novyi (strain NT) protein is Elongation factor Tu.